Reading from the N-terminus, the 143-residue chain is Transcriptional regulator MraZ (143 aa).

2 consecutive SpoVT-AbrB domains span residues 5–47 and 76–119; these read EYSH…PQKE and AAEC…SQEL.

Belongs to the MraZ family. In terms of assembly, forms oligomers.

The protein localises to the cytoplasm. It is found in the nucleoid. The protein is Transcriptional regulator MraZ of Carboxydothermus hydrogenoformans (strain ATCC BAA-161 / DSM 6008 / Z-2901).